Reading from the N-terminus, the 444-residue chain is Phosphoglucosamine mutase (444 aa).

Serine 102 acts as the Phosphoserine intermediate in catalysis. Positions 102, 241, 243, and 245 each coordinate Mg(2+). Residue serine 102 is modified to Phosphoserine.

The protein belongs to the phosphohexose mutase family. It depends on Mg(2+) as a cofactor. Activated by phosphorylation.

The catalysed reaction is alpha-D-glucosamine 1-phosphate = D-glucosamine 6-phosphate. In terms of biological role, catalyzes the conversion of glucosamine-6-phosphate to glucosamine-1-phosphate. The chain is Phosphoglucosamine mutase from Actinobacillus pleuropneumoniae serotype 7 (strain AP76).